A 345-amino-acid chain; its full sequence is S-adenosylmethionine:tRNA ribosyltransferase-isomerase (345 aa).

The protein belongs to the QueA family. Monomer.

The protein localises to the cytoplasm. The enzyme catalyses 7-aminomethyl-7-carbaguanosine(34) in tRNA + S-adenosyl-L-methionine = epoxyqueuosine(34) in tRNA + adenine + L-methionine + 2 H(+). Its pathway is tRNA modification; tRNA-queuosine biosynthesis. Transfers and isomerizes the ribose moiety from AdoMet to the 7-aminomethyl group of 7-deazaguanine (preQ1-tRNA) to give epoxyqueuosine (oQ-tRNA). The protein is S-adenosylmethionine:tRNA ribosyltransferase-isomerase of Shewanella baltica (strain OS185).